The following is a 214-amino-acid chain: Probable nicotinate-nucleotide adenylyltransferase (214 aa).

It belongs to the NadD family.

It carries out the reaction nicotinate beta-D-ribonucleotide + ATP + H(+) = deamido-NAD(+) + diphosphate. Its pathway is cofactor biosynthesis; NAD(+) biosynthesis; deamido-NAD(+) from nicotinate D-ribonucleotide: step 1/1. Functionally, catalyzes the reversible adenylation of nicotinate mononucleotide (NaMN) to nicotinic acid adenine dinucleotide (NaAD). The protein is Probable nicotinate-nucleotide adenylyltransferase of Psychromonas ingrahamii (strain DSM 17664 / CCUG 51855 / 37).